A 214-amino-acid chain; its full sequence is Probable chorismate pyruvate-lyase (214 aa).

Substrate is bound by residues R74, L112, and E173. Residues A183–S214 are disordered. Positions R197–S214 are enriched in basic and acidic residues.

The protein belongs to the UbiC family.

Its subcellular location is the cytoplasm. The catalysed reaction is chorismate = 4-hydroxybenzoate + pyruvate. Its pathway is cofactor biosynthesis; ubiquinone biosynthesis. Functionally, removes the pyruvyl group from chorismate, with concomitant aromatization of the ring, to provide 4-hydroxybenzoate (4HB) for the ubiquinone pathway. The polypeptide is Probable chorismate pyruvate-lyase (Cupriavidus metallidurans (strain ATCC 43123 / DSM 2839 / NBRC 102507 / CH34) (Ralstonia metallidurans)).